The following is a 107-amino-acid chain: U1-lycotoxin-Ls1s (107 aa).

The N-terminal stretch at 1-20 (MMKVLVVVALLVTLISYSSS) is a signal peptide. Residues 21-41 (EGIDDLEADELLSLMANEQTR) constitute a propeptide that is removed on maturation. 4 cysteine pairs are disulfide-bonded: Cys-44-Cys-59, Cys-51-Cys-68, Cys-58-Cys-86, and Cys-70-Cys-84.

It belongs to the neurotoxin 19 (CSTX) family. 04 (U1-Lctx) subfamily. In terms of tissue distribution, expressed by the venom gland.

The protein resides in the secreted. The sequence is that of U1-lycotoxin-Ls1s from Lycosa singoriensis (Wolf spider).